Reading from the N-terminus, the 182-residue chain is Large ribosomal subunit protein bL25 (182 aa).

Belongs to the bacterial ribosomal protein bL25 family. CTC subfamily. In terms of assembly, part of the 50S ribosomal subunit; part of the 5S rRNA/L5/L18/L25 subcomplex. Contacts the 5S rRNA. Binds to the 5S rRNA independently of L5 and L18.

In terms of biological role, this is one of the proteins that binds to the 5S RNA in the ribosome where it forms part of the central protuberance. The chain is Large ribosomal subunit protein bL25 from Borrelia hermsii (strain HS1 / DAH).